We begin with the raw amino-acid sequence, 323 residues long: MDKIAILTSGGDASGMNATIAYLTKYAIAKQLEVFYVKNGYYGLYHNHFITSKELDLTDFFFMGGTVIGSSRFKQFQDPSLRKQAVLNLKKRGINNLVVIGGDGSYMGAKALSELGLNCFCLPGTIDNDVNSSEFTIGFWTALEAIRVNVEAIYHTTKSHNRLAIIEVMGRDCSDLTIFGGLATNASFVVTSKNSLDLNGFEKAVRKVLQFQNYCVVLVSENIYGKNGLPSLEMVKEHFENNAIKCNLVSLGHTQRGFSPNSIELFQISLMAKHTIDLVVNNANSQVIGMKNNQAVNYDFNTAFNLPKADRTKLLNQVNTAII.

ATP contacts are provided by residues glycine 11, 72 to 73, and 102 to 105; these read RF and GDGS. Mg(2+) is bound at residue aspartate 103. Substrate is bound by residues 125–127, arginine 162, 169–171, glutamate 221, and 253–256; these read TID, MGR, and HTQR. Residue aspartate 127 is the Proton acceptor of the active site.

The protein belongs to the phosphofructokinase type A (PFKA) family. Homotetramer. Requires Mg(2+) as cofactor.

It localises to the cytoplasm. The catalysed reaction is beta-D-fructose 6-phosphate + ATP = beta-D-fructose 1,6-bisphosphate + ADP + H(+). It functions in the pathway carbohydrate degradation; glycolysis; D-glyceraldehyde 3-phosphate and glycerone phosphate from D-glucose: step 3/4. In terms of biological role, catalyzes the phosphorylation of D-fructose 6-phosphate to fructose 1,6-bisphosphate by ATP, the first committing step of glycolysis. This is Probable ATP-dependent 6-phosphofructokinase (pfkA) from Mycoplasma genitalium (strain ATCC 33530 / DSM 19775 / NCTC 10195 / G37) (Mycoplasmoides genitalium).